The chain runs to 1537 residues: Isocyanide synthase-NRPS hybrid crmA (1537 aa).

Positions 1–502 are isocyanide synthase domain; the sequence is MFHKEAGISH…CVKAGYAALF (502 aa). Residues 351–391 are disordered; that stretch reads PSVPVSPGMSSPSAASTSSSGASMQGSAATTPETHSPPTFT. The segment covering 352 to 381 has biased composition (low complexity); that stretch reads SVPVSPGMSSPSAASTSSSGASMQGSAATT. The segment covering 382 to 391 has biased composition (polar residues); that stretch reads PETHSPPTFT. The tract at residues 573–752 is adenylation; that stretch reads EAINDPFCFL…GNLIPPREDW (180 aa). The region spanning 941-1019 is the Carrier domain; sequence SSAHSIEDNV…RLSAIIALLA (79 aa). Position 977 is an O-(pantetheine 4'-phosphoryl)serine (Ser977). The interval 1293–1526 is transferase; it reads RCLKTTMFLV…LEMLVTDEEF (234 aa).

It in the N-terminal section; belongs to the isocyanide synthase family. This sequence in the C-terminal section; belongs to the NRP synthetase family.

It participates in secondary metabolite biosynthesis. Isocyanide synthase-NRPS hybrid; part of the crm gene cluster that mediates the biosynthesis of a yet unidentified copper-responsive metabolite. Converts valine into valine isocyanide that then contributes to two distinct biosynthetic pathways under copper-limiting conditions. Reaction of valine isocyanide with the imine intermediate of festuclavine results in formation of the amide bond in fumivaline A. In addition, valine isocyanide contributes to biosynthesis of a family of acylated sugar alcohols, the D-mannitol-derived fumicicolins. CrmA and associated products inhibit microbial growth from copper-starved A.fumigatus. This chain is Isocyanide synthase-NRPS hybrid crmA, found in Aspergillus fumigatus (strain ATCC MYA-4609 / CBS 101355 / FGSC A1100 / Af293) (Neosartorya fumigata).